Here is a 915-residue protein sequence, read N- to C-terminus: Isoleucine--tRNA ligase (915 aa).

Residues 58–68 carry the 'HIGH' region motif; sequence PYANGHLHIGH. Residue E568 participates in L-isoleucyl-5'-AMP binding. The 'KMSKS' region signature appears at 609–613; it reads KMSKS. ATP is bound at residue K612. C892, C895, C907, and C910 together coordinate Zn(2+).

This sequence belongs to the class-I aminoacyl-tRNA synthetase family. IleS type 1 subfamily. As to quaternary structure, monomer. The cofactor is Zn(2+).

It localises to the cytoplasm. The catalysed reaction is tRNA(Ile) + L-isoleucine + ATP = L-isoleucyl-tRNA(Ile) + AMP + diphosphate. Functionally, catalyzes the attachment of isoleucine to tRNA(Ile). As IleRS can inadvertently accommodate and process structurally similar amino acids such as valine, to avoid such errors it has two additional distinct tRNA(Ile)-dependent editing activities. One activity is designated as 'pretransfer' editing and involves the hydrolysis of activated Val-AMP. The other activity is designated 'posttransfer' editing and involves deacylation of mischarged Val-tRNA(Ile). The protein is Isoleucine--tRNA ligase of Wolinella succinogenes (strain ATCC 29543 / DSM 1740 / CCUG 13145 / JCM 31913 / LMG 7466 / NCTC 11488 / FDC 602W) (Vibrio succinogenes).